Consider the following 440-residue polypeptide: Xylose isomerase (440 aa).

Catalysis depends on residues H101 and D104. Residues E232, E268, H271, D296, D307, D309, and D339 each coordinate Mg(2+).

The protein belongs to the xylose isomerase family. As to quaternary structure, homotetramer. It depends on Mg(2+) as a cofactor.

The protein resides in the cytoplasm. It carries out the reaction alpha-D-xylose = alpha-D-xylulofuranose. This Escherichia coli (strain SE11) protein is Xylose isomerase.